A 416-amino-acid chain; its full sequence is Serine hydroxymethyltransferase (416 aa).

Residues leucine 119 and 123–125 (GHL) each bind (6S)-5,6,7,8-tetrahydrofolate. N6-(pyridoxal phosphate)lysine is present on lysine 228. Glutamate 243 provides a ligand contact to (6S)-5,6,7,8-tetrahydrofolate.

The protein belongs to the SHMT family. In terms of assembly, homodimer. Requires pyridoxal 5'-phosphate as cofactor.

The protein localises to the cytoplasm. The enzyme catalyses (6R)-5,10-methylene-5,6,7,8-tetrahydrofolate + glycine + H2O = (6S)-5,6,7,8-tetrahydrofolate + L-serine. The protein operates within one-carbon metabolism; tetrahydrofolate interconversion. Its pathway is amino-acid biosynthesis; glycine biosynthesis; glycine from L-serine: step 1/1. In terms of biological role, catalyzes the reversible interconversion of serine and glycine with tetrahydrofolate (THF) serving as the one-carbon carrier. This reaction serves as the major source of one-carbon groups required for the biosynthesis of purines, thymidylate, methionine, and other important biomolecules. Also exhibits THF-independent aldolase activity toward beta-hydroxyamino acids, producing glycine and aldehydes, via a retro-aldol mechanism. This is Serine hydroxymethyltransferase from Desulforapulum autotrophicum (strain ATCC 43914 / DSM 3382 / VKM B-1955 / HRM2) (Desulfobacterium autotrophicum).